Reading from the N-terminus, the 352-residue chain is MLETLRERLLSVQQDFTSGLKTLSDKSKEAKVKSRPRTAPYLPKYSAGLDLLSRYEDTWAALHRRAKECADAGELVDSEVVMLSAHWEKKRTSLAELQEQLQQLPALLQDVESLMASLAHLETSFEEVENHLLHLEDLCGQCELERHKQAHARHLEDYKKSKRKELEAFKAELDTEHAQKILEMEHTQQLKLKERQKFFEEAFQQDMEQYLSTGHLQIAERREPMGSMSSMEVNVDVLEQMDLMDLSDQEALDVFLNSGGEDNTVISPGLEMESNPSQNEMNLQIPNPSESASQPPASPSACTDLDTADAPLIQADEEEVQVDTALVTLNTDRKSTPGVSDDSDQCDSTQDI.

Ser11 is subject to Phosphoserine. A coiled-coil region spans residues 92-180 (TSLAELQEQL…AELDTEHAQK (89 aa)). A Nuclear export signal motif is present at residues 243 to 256 (LMDLSDQEALDVFL). Residues 267–352 (SPGLEMESNP…SDQCDSTQDI (86 aa)) form a disordered region. The segment covering 274 to 285 (SNPSQNEMNLQI) has biased composition (polar residues). Low complexity predominate over residues 286 to 301 (PNPSESASQPPASPSA). Ser340 and Ser343 each carry phosphoserine.

Belongs to the dysbindin family. As to quaternary structure, interacts (via its coiled coil domain) with KXD1. Interacts with AP3B2, TRIM32, CMYA5, PI4K2 and RNF151. Interacts with the DNA-dependent protein kinase complex DNA-PK; the interaction phosphorylates DTNBP1 in vitro. Interacts directly in this complex with XRCC5 and XRCC6. Interacts with XPO1; the interaction exports DTNBP1 out of the nucleus. Component of the biogenesis of lysosome-related organelles complex 1 (BLOC-1) composed of at least BLOC1S1, BLOC1S2, BLOC1S3, BLOC1S4, BLOC1S5, BLOC1S6, DTNBP1/BLOC1S7 and SNAPIN/BLOC1S8. Interacts directly in the complex with BLOC1S5, BLOC1S6 and SNAPIN/BLOC1S8. The BLOC-1 complex associates with the AP-3 protein complex and membrane protein cargos. This BLOC-1 complex also associates with the BLOC-2 complex in endosomes. Binds to DTNA and DTNB but may not be a physiological binding partner. Interacts with AP3M1. Ubiquitinated by TRIM32. Ubiquitination leads to DTNBP1 degradation. As to expression, detected in hippocampus neurons (at protein level). Ubiquitously expressed. The highest expression is observed in testis, liver, kidney, brain, heart and lung. In the brain, found primarily in axon bundles and axon terminals, notably in the cerebellum and hippocampus. Expressed at lower levels in stomach, small intestine and skeletal muscle, where it is detected at the sarcolemma.

It localises to the cytoplasm. The protein resides in the cytoplasmic vesicle membrane. It is found in the cytoplasmic vesicle. The protein localises to the secretory vesicle. Its subcellular location is the synaptic vesicle membrane. It localises to the endosome membrane. The protein resides in the melanosome membrane. It is found in the nucleus. The protein localises to the postsynaptic density. Its subcellular location is the presynaptic cell membrane. It localises to the endoplasmic reticulum. Its function is as follows. Component of the BLOC-1 complex, a complex that is required for normal biogenesis of lysosome-related organelles (LRO), such as platelet dense granules and melanosomes. In concert with the AP-3 complex, the BLOC-1 complex is required to target membrane protein cargos into vesicles assembled at cell bodies for delivery into neurites and nerve terminals. The BLOC-1 complex, in association with SNARE proteins, is also proposed to be involved in neurite extension. Associates with the BLOC-2 complex to facilitate the transport of TYRP1 independent of AP-3 function. Plays a role in synaptic vesicle trafficking and in neurotransmitter release. Plays a role in the regulation of cell surface exposure of DRD2. May play a role in actin cytoskeleton reorganization and neurite outgrowth. May modulate MAPK8 phosphorylation. Appears to promote neuronal transmission and viability through regulating the expression of SNAP25 and SYN1, modulating PI3-kinase-Akt signaling and influencing glutamatergic release. Regulates the expression of SYN1 through binding to its promoter. Modulates prefrontal cortical activity via the dopamine/D2 pathway. This Rattus norvegicus (Rat) protein is Dysbindin (Dtnbp1).